Consider the following 434-residue polypeptide: Alpha-enolase (434 aa).

The residue at position 2 (serine 2) is an N-acetylserine. N6-acetyllysine is present on lysine 5. A Phosphoserine modification is found at serine 27. Residue serine 40 participates in Mg(2+) binding. Residue tyrosine 44 is modified to Phosphotyrosine. Lysine 60 carries the post-translational modification N6-acetyllysine; alternate. Lysine 60 is modified (N6-succinyllysine; alternate). N6-acetyllysine is present on residues lysine 64 and lysine 71. Residue lysine 89 is modified to N6-acetyllysine; alternate. An N6-succinyllysine; alternate modification is found at lysine 89. 2 positions are modified to N6-acetyllysine: lysine 92 and lysine 126. Histidine 158 and glutamate 167 together coordinate substrate. N6-acetyllysine occurs at positions 193 and 199. The residue at position 202 (lysine 202) is an N6-acetyllysine; alternate. Lysine 202 is covalently cross-linked (Glycyl lysine isopeptide (Lys-Gly) (interchain with G-Cter in SUMO2); alternate). The active-site Proton donor is glutamate 210. N6-acetyllysine; alternate is present on residues lysine 228 and lysine 233. Lysine 228 carries the post-translational modification N6-succinyllysine; alternate. Lysine 228 carries the N6-(2-hydroxyisobutyryl)lysine; alternate modification. Lysine 233 carries the post-translational modification N6-malonyllysine; alternate. Position 245 (aspartate 245) interacts with Mg(2+). Serine 254 is modified (phosphoserine). The residue at position 256 (lysine 256) is an N6-acetyllysine. Serine 263 and serine 272 each carry phosphoserine. Position 281 is an N6-acetyllysine; alternate (lysine 281). N6-(2-hydroxyisobutyryl)lysine; alternate is present on lysine 281. Lysine 285 is subject to N6-acetyllysine. Tyrosine 287 bears the Phosphotyrosine mark. Serine 291 bears the Phosphoserine mark. Mg(2+) is bound by residues glutamate 293 and aspartate 318. 2 residues coordinate substrate: glutamate 293 and aspartate 318. Lysine 335 and lysine 343 each carry N6-acetyllysine. Residue lysine 343 is the Proton acceptor of the active site. Substrate-binding positions include 370-373 (SHRS) and lysine 394. A required for interaction with PLG region spans residues 405 to 434 (AKYNQLLRIEEELGSKAKFAGRNFRNPLAK). Residue lysine 406 is modified to N6-acetyllysine. Lysine 420 carries the post-translational modification N6-acetyllysine; alternate. N6-succinyllysine; alternate is present on lysine 420. Position 420 is an N6-malonyllysine; alternate (lysine 420).

Belongs to the enolase family. As to quaternary structure, mammalian enolase is composed of 3 isozyme subunits, alpha, beta and gamma, which can form homodimers or heterodimers which are cell-type and development-specific. ENO1 interacts with PLG in the neuronal plasma membrane and promotes its activation. The C-terminal lysine is required for this binding. Interacts with ENO4 and PGAM2. Interacts with CMTM6. Mg(2+) is required as a cofactor. ISGylated. Post-translationally, lysine 2-hydroxyisobutyrylation (Khib) by p300/EP300 activates the phosphopyruvate hydratase activity.

It is found in the cytoplasm. The protein resides in the cell membrane. The enzyme catalyses (2R)-2-phosphoglycerate = phosphoenolpyruvate + H2O. Its pathway is carbohydrate degradation; glycolysis; pyruvate from D-glyceraldehyde 3-phosphate: step 4/5. Functionally, glycolytic enzyme the catalyzes the conversion of 2-phosphoglycerate to phosphoenolpyruvate. In addition to glycolysis, involved in various processes such as growth control, hypoxia tolerance and allergic responses. May also function in the intravascular and pericellular fibrinolytic system due to its ability to serve as a receptor and activator of plasminogen on the cell surface of several cell-types such as leukocytes and neurons. Stimulates immunoglobulin production. This chain is Alpha-enolase (ENO1), found in Macaca fascicularis (Crab-eating macaque).